Reading from the N-terminus, the 947-residue chain is Protocadherin alpha-4 (947 aa).

The signal sequence occupies residues 1–29 (MEFSWGSGQESQRLLLSFLFLAIWEPGNS). Cadherin domains are found at residues 30–133 (QLHY…PPTF), 134–242 (PTTQ…SPVF), 243–350 (DRSL…APEL), 351–455 (EFKS…APAF), 456–565 (AQPE…APTL), and 573–681 (SGGI…APSR). Over 30–697 (QLHYSIPEEA…NAEASLVDVN (668 aa)) the chain is Extracellular. A disulfide bridge connects residues Cys-96 and Cys-102. Asn-257 and Asn-265 each carry an N-linked (GlcNAc...) asparagine glycan. Asn-548 carries an N-linked (GlcNAc...) asparagine glycan. The chain crosses the membrane as a helical span at residues 698–718 (VYLIIAICAVSSLLVLTLLLY). Residues 719 to 947 (SALRCSTVPS…GNSTTDNSDQ (229 aa)) lie on the Cytoplasmic side of the membrane. PXXP repeat units follow at residues 734-737 (PPKP), 774-777 (PSLS), 796-799 (PRQP), 829-832 (PGGP), 870-873 (PGNP), and 888-891 (PGSP). Residues 734 to 891 (PPKPVMVCSS…PDKFIIPGSP (158 aa)) are 6 X 4 AA repeats of P-X-X-P. The required for interaction with FYN stretch occupies residues 738 to 947 (VMVCSSAVGS…GNSTTDNSDQ (210 aa)). Disordered stretches follow at residues 761 to 805 (GEYP…DWRY) and 824 to 853 (ILRA…EVSP). A disordered region spans residues 897–947 (RQESANNQIDKSDFITFGKKEETKKKKKKKKGNKTQEKKEKGNSTTDNSDQ). A compositionally biased stretch (basic and acidic residues) spans 906–920 (DKSDFITFGKKEETK).

As to quaternary structure, forms homodimers in trans (molecules expressed by two different cells). Forms promiscuous heterodimers in cis (at the plasma membrane of the same cell) with other protocadherins. Interacts with FYN. In terms of tissue distribution, detected in brain.

Its subcellular location is the cell membrane. Its function is as follows. Calcium-dependent cell-adhesion protein involved in cells self-recognition and non-self discrimination. Thereby, it is involved in the establishment and maintenance of specific neuronal connections in the brain. The protein is Protocadherin alpha-4 of Rattus norvegicus (Rat).